The following is a 975-amino-acid chain: Ubiquitin C-terminal hydrolase 15 (975 aa).

Zn(2+) contacts are provided by C88, C91, C99, C102, C108, C112, H121, and C125. An MYND-type zinc finger spans residues 88 to 125 (CATCHGPAKTRCSRCKSVRYCSGKCQIIHWRQGHKQTC). A disordered region spans residues 301-378 (EGPYASAAES…STKTAVSTNS (78 aa)). Residues 309–322 (ESLQRSNSSGNVTG) show a composition bias toward polar residues. Positions 354–369 (YDGHEKNPHNKNEQRS) are enriched in basic and acidic residues. The 307-residue stretch at 441-747 (RGLFNCGNSC…GAYMLFYMRS (307 aa)) folds into the USP domain. Residue C450 is the Nucleophile of the active site. Residue H706 is the Proton acceptor of the active site. The tract at residues 764–783 (PTCSKRHSSKSSKGSKQDLN) is disordered.

Belongs to the peptidase C19 family. Highly expressed in young panicles. Expressed in roots, leaf blades, leaf sheaths and stems. Expressed at low levels in brown grains.

Its subcellular location is the cytoplasm. It is found in the nucleus. It catalyses the reaction Thiol-dependent hydrolysis of ester, thioester, amide, peptide and isopeptide bonds formed by the C-terminal Gly of ubiquitin (a 76-residue protein attached to proteins as an intracellular targeting signal).. Functionally, recognizes and hydrolyzes the peptide bond at the C-terminal Gly of ubiquitin. Involved in the processing of poly-ubiquitin precursors as well as that of ubiquitinated proteins. Involved in the regulation of grain size. Acts as positive regulator of grain width and size by influencing cell proliferation. Functions partially antagonistically with GW2 in the regulation of grain width. Possesses deubiquitinating enzyme activity in vitro. The polypeptide is Ubiquitin C-terminal hydrolase 15 (Oryza sativa subsp. japonica (Rice)).